Reading from the N-terminus, the 417-residue chain is Dibenzothiophene monooxygenase (417 aa).

The tract at residues 18 to 124 is helical N-terminus; sequence NDPVAVARGL…HLYTQIAQNN (107 aa). FMN-binding positions include tyrosine 96, 129–134, 159–163, arginine 282, 369–370, and histidine 391; these read NASSEN, KHFCS, and AR. Residues 125–233 are central beta-barrel N-terminus; the sequence is WWTGNASSEN…KVEPDEVLGA (109 aa). Residues 131-142 are lid loop; the sequence is SSENNSHVLDWK. Residues 234 to 417 are helical C-terminus; sequence PNAFVLAFIQ…GQYPIPGFTS (184 aa).

The protein belongs to the DszC flavin monooxygenase family. As to quaternary structure, homotetramer formed by a dimer of dimers; FMN binds between monomers of the homodimer.

The protein localises to the cytoplasm. The enzyme catalyses dibenzothiophene + 2 FMNH2 + 2 O2 = dibenzothiophene 5,5-dioxide + 2 FMN + 2 H2O + 2 H(+). It catalyses the reaction dibenzothiophene + FMNH2 + O2 = dibenzothiophene 5-oxide + FMN + H2O + H(+). The catalysed reaction is dibenzothiophene 5-oxide + FMNH2 + O2 = dibenzothiophene 5,5-dioxide + FMN + H2O + H(+). The protein operates within sulfur metabolism; dibenzothiophene degradation. DBT degradation completely inhibited by Cu(2+), Mn(2+), p-chloromercuribenzoic acid, 2,2-bipyridyl, 1,10-phenanthroline, and strongly inhibited by Zn(2+), 5,5'- Dithiobis(2-nitrobenzoic acid) and 8-quinolinol. Catalyzes the first step of the '4S' desulfurization pathway that removes covalently bound sulfur from dibenzothiophene (DBT) without breaking carbon-carbon bonds. Sulfur dioxygenase which converts DBT to DBT-sulfone (DBTO2 or DBT 5,5-dioxide) in a stepwise manner. Also acts on thioxanthen-9-one and 4,6-dimethyl DBT and 2,8-dimethyl DBT. This Rhodococcus erythropolis (Arthrobacter picolinophilus) protein is Dibenzothiophene monooxygenase.